The chain runs to 212 residues: ATP-dependent dethiobiotin synthetase BioD (212 aa).

13-18 (GIGKTV) lines the ATP pocket. Threonine 17 serves as a coordination point for Mg(2+). Residue lysine 33 is part of the active site. Residue glutamate 100 participates in Mg(2+) binding. Residues 100-103 (EGAG) and 184-186 (PHV) each bind ATP.

It belongs to the dethiobiotin synthetase family. In terms of assembly, homodimer. Requires Mg(2+) as cofactor.

Its subcellular location is the cytoplasm. The enzyme catalyses (7R,8S)-7,8-diammoniononanoate + CO2 + ATP = (4R,5S)-dethiobiotin + ADP + phosphate + 3 H(+). The protein operates within cofactor biosynthesis; biotin biosynthesis; biotin from 7,8-diaminononanoate: step 1/2. In terms of biological role, catalyzes a mechanistically unusual reaction, the ATP-dependent insertion of CO2 between the N7 and N8 nitrogen atoms of 7,8-diaminopelargonic acid (DAPA, also called 7,8-diammoniononanoate) to form a ureido ring. This is ATP-dependent dethiobiotin synthetase BioD from Nitrobacter hamburgensis (strain DSM 10229 / NCIMB 13809 / X14).